A 132-amino-acid chain; its full sequence is ATP synthase epsilon chain (132 aa).

The protein belongs to the ATPase epsilon chain family. In terms of assembly, F-type ATPases have 2 components, CF(1) - the catalytic core - and CF(0) - the membrane proton channel. CF(1) has five subunits: alpha(3), beta(3), gamma(1), delta(1), epsilon(1). CF(0) has three main subunits: a, b and c.

Its subcellular location is the cell inner membrane. Functionally, produces ATP from ADP in the presence of a proton gradient across the membrane. The sequence is that of ATP synthase epsilon chain from Anaeromyxobacter sp. (strain K).